We begin with the raw amino-acid sequence, 258 residues long: NAD kinase (258 aa).

Residue Asp-44 is the Proton acceptor of the active site. NAD(+) is bound by residues 44-45 (DG), 116-117 (NE), Asp-146, Ala-154, and 157-162 (TAYNLS).

Belongs to the NAD kinase family. It depends on a divalent metal cation as a cofactor.

It is found in the cytoplasm. The catalysed reaction is NAD(+) + ATP = ADP + NADP(+) + H(+). Involved in the regulation of the intracellular balance of NAD and NADP, and is a key enzyme in the biosynthesis of NADP. Catalyzes specifically the phosphorylation on 2'-hydroxyl of the adenosine moiety of NAD to yield NADP. This chain is NAD kinase, found in Zymomonas mobilis subsp. mobilis (strain ATCC 31821 / ZM4 / CP4).